Consider the following 273-residue polypeptide: Light-independent protochlorophyllide reductase iron-sulfur ATP-binding protein (273 aa).

ATP is bound by residues 12-17 (GIGKST) and K41. Residue S16 participates in Mg(2+) binding. C97 and C131 together coordinate [4Fe-4S] cluster. 182–183 (NR) provides a ligand contact to ATP.

It belongs to the NifH/BchL/ChlL family. Homodimer. Protochlorophyllide reductase is composed of three subunits; BchL, BchN and BchB. [4Fe-4S] cluster serves as cofactor.

The catalysed reaction is chlorophyllide a + oxidized 2[4Fe-4S]-[ferredoxin] + 2 ADP + 2 phosphate = protochlorophyllide a + reduced 2[4Fe-4S]-[ferredoxin] + 2 ATP + 2 H2O. It participates in porphyrin-containing compound metabolism; bacteriochlorophyll biosynthesis (light-independent). In terms of biological role, component of the dark-operative protochlorophyllide reductase (DPOR) that uses Mg-ATP and reduced ferredoxin to reduce ring D of protochlorophyllide (Pchlide) to form chlorophyllide a (Chlide). This reaction is light-independent. The L component serves as a unique electron donor to the NB-component of the complex, and binds Mg-ATP. This is Light-independent protochlorophyllide reductase iron-sulfur ATP-binding protein from Roseiflexus sp. (strain RS-1).